Consider the following 364-residue polypeptide: Fructose-1,6-bisphosphatase class 1 2 (364 aa).

Mg(2+)-binding residues include Glu101, Asp123, Leu125, and Asp126. Substrate-binding positions include Asp126–Ser129 and Asn218. A Mg(2+)-binding site is contributed by Glu290.

The protein belongs to the FBPase class 1 family. In terms of assembly, homotetramer. The cofactor is Mg(2+).

Its subcellular location is the cytoplasm. The enzyme catalyses beta-D-fructose 1,6-bisphosphate + H2O = beta-D-fructose 6-phosphate + phosphate. Its pathway is carbohydrate biosynthesis; gluconeogenesis. This Cupriavidus necator (strain ATCC 17699 / DSM 428 / KCTC 22496 / NCIMB 10442 / H16 / Stanier 337) (Ralstonia eutropha) protein is Fructose-1,6-bisphosphatase class 1 2.